The following is a 278-amino-acid chain: uncharacterized protein (278 aa).

This sequence belongs to the short-chain dehydrogenases/reductases (SDR) family.

This is an uncharacterized protein from Bacillus subtilis (strain 168).